Reading from the N-terminus, the 280-residue chain is 3-deoxy-manno-octulosonate cytidylyltransferase (280 aa).

This sequence belongs to the KdsB family.

Its subcellular location is the cytoplasm. It catalyses the reaction 3-deoxy-alpha-D-manno-oct-2-ulosonate + CTP = CMP-3-deoxy-beta-D-manno-octulosonate + diphosphate. Its pathway is nucleotide-sugar biosynthesis; CMP-3-deoxy-D-manno-octulosonate biosynthesis; CMP-3-deoxy-D-manno-octulosonate from 3-deoxy-D-manno-octulosonate and CTP: step 1/1. The protein operates within bacterial outer membrane biogenesis; lipopolysaccharide biosynthesis. Functionally, activates KDO (a required 8-carbon sugar) for incorporation into bacterial lipopolysaccharide in Gram-negative bacteria. This chain is 3-deoxy-manno-octulosonate cytidylyltransferase, found in Colwellia psychrerythraea (strain 34H / ATCC BAA-681) (Vibrio psychroerythus).